The sequence spans 622 residues: MAFNFNWSPLMADAGFYTRAQELLTAALNKSPKPPIIVDDIVVTELNLGSNPPELEILEIGDLAEDRFRGIFKMSYAGDAFLTLKTCVQANPLNTYLLTRHPFASPQPLAAATGLTIPLQITLSDIKLSGFVILVFSKQKGITVVFRNDPLESLKVSSTFDSIPFVRDYLQKEIEGQLRILFMDELPAIIHRLSLRLWGTEYSELETTSAQVTNPPLEGPGLDPLLNPPEDPVDASGNVLSTSEIASLSLDSGVEMHSLFSRKNVLRLAALTDSQRTLSLFTPSIQEVVFRAWTGLMEQADGPSGLVSPMSPPLSRTHSHVATSSLSLQDAASLASSSHSRLSLPSTGFSGYGLSMGAGRHSKAHARKRKKRVVDLRRRPKNTDDMESVSGESEFTESTSAASVFSGSTIPEENNDDPVTPPGSPPRTIRQPTLCDRIVARNGAERNARRGIPAEFGHDIPASRTTLPTANDIARMLATTSSLQQQLHPANSKSLPPQVPPQEPALRPSLTSNSPYPIEKPNASNYTSSGDSQQQQQQQQQHQTHLPSSLIMEAAQSGGILEQAWMMKMASEIARRIQDEKMGGEDAAGSSNNKNDNKNNNTGGFWEQSLMRSHTPPPAYRH.

In terms of domain architecture, SMP-LTD spans Met1 to Leu195. Disordered regions lie at residues Gln211 to Asp234, Pro303 to Ala322, Ser355 to Pro432, Glu445 to Arg464, Ser482 to Leu546, and Lys581 to His622. Over residues Asn214 to Leu225 the composition is skewed to low complexity. Positions Arg360–Arg372 are enriched in basic residues. Residues Val373–Asp384 show a composition bias toward basic and acidic residues. Positions Ser388 to Val404 are enriched in low complexity. 2 stretches are compositionally biased toward polar residues: residues Ser482 to Leu495 and Asn522 to Ser532. Low complexity-rich tracts occupy residues Gln533–Gln543 and Asn592–Asn601.

The protein belongs to the MDM34 family. In terms of assembly, component of the ER-mitochondria encounter structure (ERMES) or MDM complex, composed of MMM1, MDM10, MDM12 and MDM34.

The protein localises to the mitochondrion outer membrane. In terms of biological role, component of the ERMES/MDM complex, which serves as a molecular tether to connect the endoplasmic reticulum (ER) and mitochondria. Components of this complex are involved in the control of mitochondrial shape and protein biogenesis, and function in nonvesicular lipid trafficking between the ER and mitochondria. MDM34 is required for the interaction of the ER-resident membrane protein MMM1 and the outer mitochondrial membrane-resident beta-barrel protein MDM10. The chain is Mitochondrial distribution and morphology protein 34 from Ajellomyces capsulatus (strain G186AR / H82 / ATCC MYA-2454 / RMSCC 2432) (Darling's disease fungus).